A 396-amino-acid polypeptide reads, in one-letter code: Methylthioribose kinase (396 aa).

Residues Asn-44, Lys-61, and 115–117 (EDL) contribute to the ATP site. Asp-233 serves as a coordination point for substrate. Residue 250–252 (DPE) participates in ATP binding. Arg-340 contributes to the substrate binding site.

Belongs to the methylthioribose kinase family. As to quaternary structure, homodimer.

The enzyme catalyses 5-(methylsulfanyl)-D-ribose + ATP = 5-(methylsulfanyl)-alpha-D-ribose 1-phosphate + ADP + H(+). It participates in amino-acid biosynthesis; L-methionine biosynthesis via salvage pathway; S-methyl-5-thio-alpha-D-ribose 1-phosphate from S-methyl-5'-thioadenosine (hydrolase route): step 2/2. Catalyzes the phosphorylation of methylthioribose into methylthioribose-1-phosphate. In Geobacillus kaustophilus (strain HTA426), this protein is Methylthioribose kinase.